A 1217-amino-acid polypeptide reads, in one-letter code: Splicing factor 3B subunit 3 (1217 aa).

Interaction with PHF5A, SF3B1 and SF3B5 regions lie at residues 105–119 (ETFG…VPGQ) and 145–168 (NRDA…TLVY). Residue Ser-156 is modified to Phosphoserine. 2 interaction with SF3B1 and SF3B5 regions span residues 193 to 231 (DNDP…LEEH) and 786 to 804 (RKFV…ETDH). Positions 1028–1049 (TYPRWVTTASLLDYDTVAGADK) are interaction with SF3B1. Residues 1100 to 1123 (TVLSLQKTTLIPGGSESLVYTTLS) form an interaction with SF3B5 region. Residue Thr-1200 is modified to Phosphothreonine.

It belongs to the RSE1 family. As to quaternary structure, component of the 17S U2 SnRNP complex, a ribonucleoprotein complex that contains small nuclear RNA (snRNA) U2 and a number of specific proteins. Part of the SF3B subcomplex of the 17S U2 SnRNP complex. SF3B associates with the splicing subcomplex SF3A and a 12S RNA unit to form the U2 small nuclear ribonucleoproteins complex (U2 snRNP). Within the SF3B subcomplex, interacts directly with SF3B1 (via HEAT domain), SF3B5 and PHF5A. Identified in the spliceosome A complex; remains associated with the spliceosome throughout the splicing process. Component of the spliceosome B complex. Identified in the spliceosome C complex. Identified in the spliceosome E complex. Component of the minor (U12-type spliceosome) spliceosome. Within this complex, interacts with SCNM1. Associates with the STAGA transcription coactivator-HAT complex. Interacts with SUPT3H. Interacts with TAF3.

It localises to the nucleus. In terms of biological role, component of the 17S U2 SnRNP complex of the spliceosome, a large ribonucleoprotein complex that removes introns from transcribed pre-mRNAs. The 17S U2 SnRNP complex (1) directly participates in early spliceosome assembly and (2) mediates recognition of the intron branch site during pre-mRNA splicing by promoting the selection of the pre-mRNA branch-site adenosine, the nucleophile for the first step of splicing. Within the 17S U2 SnRNP complex, SF3B3 is part of the SF3B subcomplex, which is required for 'A' complex assembly formed by the stable binding of U2 snRNP to the branchpoint sequence in pre-mRNA. Sequence independent binding of SF3A and SF3B subcomplexes upstream of the branch site is essential, it may anchor U2 snRNP to the pre-mRNA. May also be involved in the assembly of the 'E' complex. Also acts as a component of the minor spliceosome, which is involved in the splicing of U12-type introns in pre-mRNAs. The polypeptide is Splicing factor 3B subunit 3 (SF3B3) (Bos taurus (Bovine)).